Here is a 383-residue protein sequence, read N- to C-terminus: Paralemmin-1 (383 aa).

Position 1 is an N-acetylmethionine (M1). Residues D7 to G101 are a coiled coil. Disordered regions lie at residues R51–M164, T242–Q293, and S333–K374. The span at D69–D96 shows a compositional bias: basic and acidic residues. Residues S116, S122, and S124 each carry the phosphoserine modification. A compositionally biased stretch (polar residues) spans E133 to L143. 3 positions are modified to phosphothreonine: T141, T145, and T153. A phosphoserine mark is found at S157 and S161. T242 carries the phosphothreonine modification. S244 carries the post-translational modification Phosphoserine. The segment covering G257–T273 has biased composition (basic and acidic residues). The residue at position 345 (S345) is a Phosphoserine. Residues Q357 to T367 are compositionally biased toward polar residues. Residues T361, T362, and T363 each carry the phosphothreonine modification. S365 carries the phosphoserine modification. T367 is subject to Phosphothreonine. S-palmitoyl cysteine attachment occurs at residues C377 and C379. Residue C380 is modified to Cysteine methyl ester. C380 carries S-farnesyl cysteine lipidation. Residues S381–M383 constitute a propeptide, removed in mature form.

This sequence belongs to the paralemmin family. In terms of assembly, interacts with dopamine receptor DRD3. In terms of tissue distribution, expressed in neurons cells of neuropil-rich areas of the brain, in the Purkinje cells of the cerebellum, in cells of the cerebral cortex, hippocampus, brainstem nuclei and glial processes and sheaths. Expressed in the medulla of the adrenal chromaffin cells and renal duct cells (at protein level).

Its subcellular location is the cell membrane. It is found in the cell projection. The protein resides in the filopodium membrane. The protein localises to the axon. It localises to the dendrite. Its subcellular location is the dendritic spine. It is found in the basolateral cell membrane. The protein resides in the apicolateral cell membrane. Involved in plasma membrane dynamics and cell process formation. Necessary for axonal and dendritic filopodia induction, for dendritic spine maturation and synapse formation in a palmitoylation-dependent manner. The protein is Paralemmin-1 (Palm) of Rattus norvegicus (Rat).